A 326-amino-acid polypeptide reads, in one-letter code: Sucrose operon repressor (326 aa).

One can recognise an HTH lacI-type domain in the interval 1–57 (MKPKLNDVAKLAGVSATTVSRVINNHGYLSSQTKEKVFAAMRELHYQPNNMARSLQG). Positions 5-24 (LNDVAKLAGVSATTVSRVIN) form a DNA-binding region, H-T-H motif.

Its function is as follows. Negative regulator of scrB expression. The polypeptide is Sucrose operon repressor (scrR) (Pediococcus pentosaceus).